Reading from the N-terminus, the 225-residue chain is UPF0758 protein NMB1038 (225 aa).

In terms of domain architecture, MPN spans 102 to 224 (VLSDPDTVAD…VCSFRQLGLM (123 aa)). Zn(2+) contacts are provided by histidine 173, histidine 175, and aspartate 186. A JAMM motif motif is present at residues 173–186 (HNHPGGSPEPSQED).

The protein belongs to the UPF0758 family.

The protein is UPF0758 protein NMB1038 of Neisseria meningitidis serogroup B (strain ATCC BAA-335 / MC58).